Reading from the N-terminus, the 198-residue chain is Na(+)-translocating NADH-quinone reductase subunit E (198 aa).

Helical transmembrane passes span 11–31 (AVFI…FLAV), 39–59 (FGLG…NNLV), 77–97 (FLNF…LEMI), 109–129 (LGIF…VSFM), 140–160 (IVYG…LASI), and 176–196 (LGVT…FSGV).

Belongs to the NqrDE/RnfAE family. As to quaternary structure, composed of six subunits; NqrA, NqrB, NqrC, NqrD, NqrE and NqrF.

It is found in the cell inner membrane. The catalysed reaction is a ubiquinone + n Na(+)(in) + NADH + H(+) = a ubiquinol + n Na(+)(out) + NAD(+). In terms of biological role, NQR complex catalyzes the reduction of ubiquinone-1 to ubiquinol by two successive reactions, coupled with the transport of Na(+) ions from the cytoplasm to the periplasm. NqrA to NqrE are probably involved in the second step, the conversion of ubisemiquinone to ubiquinol. The polypeptide is Na(+)-translocating NADH-quinone reductase subunit E (Proteus mirabilis (strain HI4320)).